We begin with the raw amino-acid sequence, 573 residues long: Developmental and secondary metabolism regulator VEL1 (573 aa).

In terms of domain architecture, Velvet spans 26-220; sequence NRHLWYQLTV…ADQGCRVRIR (195 aa). The short motif at 40–45 is the Nuclear localization signal element; it reads ERARAC. Positions 222–520 are disordered; the sequence is DVRMRKRDGK…STGGKRKHDH (299 aa). Basic and acidic residues predominate over residues 230–245; sequence GKGSGFDRRGEEEYSR. 2 stretches are compositionally biased toward pro residues: residues 291–310 and 341–351; these read APPP…PPAA and APIPPATPTGP. Residues 352–363 are compositionally biased toward low complexity; that stretch reads YPTSSAAPSPYA. The segment covering 379 to 389 has biased composition (pro residues); it reads PPAPSASPAPP. Residues 432–448 show a composition bias toward polar residues; that stretch reads TPASQPTYSTPASQPTY. Residues 458 to 475 show a composition bias toward pro residues; sequence SAPPPAPYSAPAPPPPRP. A PEST region spans residues 476-504; that stretch reads SMSQSSLAPLKIASLVSPLPPIEAQTEPL.

This sequence belongs to the velvet family. VeA subfamily. In terms of assembly, component of the heterotrimeric velvet complex composed of LAE1, VEL1 and VEL2; VEL1 acting as a bridging protein between LAE1 and VEL2. Interacts with LAE1.

The protein resides in the nucleus. It is found in the cytoplasm. Component of the velvet transcription factor complex that controls sexual/asexual developmental ratio in response to light, promoting sexual development in the darkness while stimulating asexual sporulation under illumination. The velvet complex hat acts as a global regulator for secondary metabolite gene expression. Regulates expression of the carbohydrate-active enzyme gene clusters. This chain is Developmental and secondary metabolism regulator VEL1, found in Hypocrea jecorina (strain QM6a) (Trichoderma reesei).